The chain runs to 400 residues: Na(+)/H(+) antiporter NhaA (400 aa).

11 consecutive transmembrane segments (helical) span residues 10–30 (FNLE…AMII), 60–80 (AHHW…GLEL), 95–115 (IILP…VYLF), 126–146 (GWAI…SLLG), 155–175 (VFLV…IALF), 178–198 (NDLS…LYML), 218–238 (IAVL…ALFI), 265–285 (GILP…AGFG), 295–315 (IAAG…WLIF), 334–354 (AALL…LAFA), and 364–384 (LGII…LKTT).

Belongs to the NhaA Na(+)/H(+) (TC 2.A.33) antiporter family.

It is found in the cell inner membrane. It catalyses the reaction Na(+)(in) + 2 H(+)(out) = Na(+)(out) + 2 H(+)(in). In terms of biological role, na(+)/H(+) antiporter that extrudes sodium in exchange for external protons. The protein is Na(+)/H(+) antiporter NhaA of Psychrobacter arcticus (strain DSM 17307 / VKM B-2377 / 273-4).